The following is a 199-amino-acid chain: Tumor necrosis factor ligand superfamily member 4 (199 aa).

At 1–25 the chain is on the cytoplasmic side; that stretch reads MEGEGVQPPDENLENGSRPRFKWKK. Residues 26 to 48 form a helical; Signal-anchor for type II membrane protein membrane-spanning segment; that stretch reads VLRLVVSGIKAAGLLLCVVYVCL. Residues 49 to 199 are Extracellular-facing; it reads QFSSSPAKDS…YSSTVNQVPL (151 aa). Residues 59–176 form the THD domain; sequence PIQRLRAPVT…QINDGELIIV (118 aa). Intrachain disulfides connect Cys70/Cys163 and Cys98/Cys184. Asn91 and Asn157 each carry an N-linked (GlcNAc...) asparagine glycan.

This sequence belongs to the tumor necrosis factor family. Homotrimer. Detected in T-cell lines, but not in a macrophage cell line.

The protein resides in the membrane. In terms of biological role, cytokine that binds to TNFRSF4. Co-stimulates T-cell proliferation and cytokine production. In Rattus norvegicus (Rat), this protein is Tumor necrosis factor ligand superfamily member 4 (Tnfsf4).